We begin with the raw amino-acid sequence, 70 residues long: U2-agatoxin-Ao1n (70 aa).

The first 20 residues, 1 to 20 (MRAIISLLLISAMVFYIIAA), serve as a signal peptide directing secretion. A propeptide spanning residues 21 to 34 (VPEEEGLQLSEDER) is cleaved from the precursor. Intrachain disulfides connect Cys37/Cys53, Cys44/Cys58, and Cys52/Cys68. Leucine amide is present on Leu69.

Belongs to the neurotoxin 01 (U2-agtx) family. In terms of tissue distribution, expressed by the venom gland.

The protein localises to the secreted. In terms of biological role, insect active toxin causing rapid but reversible paralysis in crickets. No activity shown in mammals. Does not show effect on mammalian voltage-gated calcium channels. In Agelena orientalis (Funnel-web spider), this protein is U2-agatoxin-Ao1n.